The sequence spans 107 residues: Putative double-stranded DNA mimic protein Spro_2690 (107 aa).

It belongs to the putative dsDNA mimic protein family.

Its function is as follows. May act as a double-stranded DNA (dsDNA) mimic. Probably regulates the activity of a dsDNA-binding protein. This Serratia proteamaculans (strain 568) protein is Putative double-stranded DNA mimic protein Spro_2690.